Here is a 281-residue protein sequence, read N- to C-terminus: Sorbose reductase SOU1 (281 aa).

NADP(+)-binding residues include I47, K74, and N119. Residues S173 and Y188 each act as proton donor in the active site. Residues Y188, K192, I221, and T223 each contribute to the NADP(+) site. Residue K192 is the Lowers pKa of active site Tyr of the active site.

This sequence belongs to the short-chain dehydrogenases/reductases (SDR) family. Homotetramer.

The catalysed reaction is D-sorbitol + NADP(+) = keto-L-sorbose + NADPH + H(+). Its pathway is carbohydrate degradation; L-sorbose degradation. In terms of biological role, catalyzes the NADP dependent reduction of L-sorbose to D-glucitol. Can also convert fructose to mannitol, but less efficiently. This is Sorbose reductase SOU1 (SOU1) from Candida albicans (strain SC5314 / ATCC MYA-2876) (Yeast).